The sequence spans 317 residues: GTPase Era (317 aa).

The Era-type G domain occupies 17-190 (RAGFACFVGR…ADLLTPLLPE (174 aa)). A G1 region spans residues 25–32 (GRPNAGKS). 25 to 32 (GRPNAGKS) lines the GTP pocket. The G2 stretch occupies residues 51 to 55 (QTTRH). Residues 72-75 (DTPG) are G3. Residues 72-76 (DTPGL) and 135-138 (TKTD) contribute to the GTP site. A G4 region spans residues 135–138 (TKTD). Residues 169-171 (VSA) are G5. The KH type-2 domain maps to 221–303 (VRDELPHSIA…FLDLHVKVAK (83 aa)).

It belongs to the TRAFAC class TrmE-Era-EngA-EngB-Septin-like GTPase superfamily. Era GTPase family. Monomer.

The protein resides in the cytoplasm. The protein localises to the cell membrane. Functionally, an essential GTPase that binds both GDP and GTP, with rapid nucleotide exchange. Plays a role in 16S rRNA processing and 30S ribosomal subunit biogenesis and possibly also in cell cycle regulation and energy metabolism. This chain is GTPase Era, found in Streptomyces coelicolor (strain ATCC BAA-471 / A3(2) / M145).